Here is a 405-residue protein sequence, read N- to C-terminus: Multidrug resistance protein MdtH (405 aa).

Transmembrane regions (helical) follow at residues 13–33 (YFLLMDNMLVVMGFYVVFPLI), 34–54 (SIRFVDQLGWAALLVGIALGL), 78–95 (MIIAGMLMRALGFVLMGI), 99–116 (PWLLWLSCALSALGGTLF), 139–159 (LLMMQDSACSVIGALLGSWLL), 165–185 (LVCLAGAVLFVFAAIFNAWLL), 213–233 (YVLTLTGYYMLSVQVMLMLPI), 243–263 (AAVKWMYAIEAALSLSLLYPI), 277–297 (LMAGLTVMLLSLFPIGLIEDL), 299–319 (ALFMLIGLFYIGSIIAEPARE), 340–360 (LGLALGGAIGYSGGGWLYDVG), and 365–385 (IPQLPWFMLGLIGFITLLGLY).

The protein belongs to the major facilitator superfamily. DHA1 family. MdtH (TC 2.A.1.2.21) subfamily.

It is found in the cell inner membrane. In Sodalis glossinidius (strain morsitans), this protein is Multidrug resistance protein MdtH.